A 300-amino-acid chain; its full sequence is Ribonuclease HIII (300 aa).

The RNase H type-2 domain maps to 83–300 (IPIIGSDEVG…THKAQALLTK (218 aa)). The a divalent metal cation site is built by aspartate 89, glutamate 90, and aspartate 194.

It belongs to the RNase HII family. RnhC subfamily. Requires Mn(2+) as cofactor. It depends on Mg(2+) as a cofactor.

The protein resides in the cytoplasm. It carries out the reaction Endonucleolytic cleavage to 5'-phosphomonoester.. In terms of biological role, endonuclease that specifically degrades the RNA of RNA-DNA hybrids. This is Ribonuclease HIII from Streptococcus pyogenes serotype M28 (strain MGAS6180).